A 695-amino-acid chain; its full sequence is MSDKECTVFVLDLGKDMGTCHHGRSHSDLEWTLSYFHDELSHKFLANRKTDVVGIVGYKCDDTKNDLAEQEAYWNISVLYPIQTALFSKLQSVSQTLKPSNTMQGDLISAIVVSFDLMARHCKKNKWKKKMIVLTAARGIIDFSDYIGIAEQLLQHDVFLGVYGVDFDQEDINYSEPLKESQKKENEVRIQEFVESCHGQYCTFQQIYNNIGKPWVRKVRPVAIFRGTFSIGNRDSKDTSISIQVERYPRTRLTKPPTSSAFYENDMSKNYECLNIENSNVENKSMESDAVSTVRSYMVRDPKTNDSFEVKREDLESGYSYGRTIVPISRSDEDVLALDTIPGYEILGFIPKSSLPIYYTISDTNIIVPKDDFESKLNFSAFVQSLEREHRYALARFVSKDKGVPVLLVLMPYVEFKRHYLVDIQLPFAEDVRPYSFSEFEKLSNEEDMRQIDFAVSNYIDNMDLDSSDCGFNPPFEPENTFSMIPHRLQQAISYYANSPEGDLPQPNIYLTRYTNPPKSLLDNCILDLKLIKEKLTVNVPVKPKYSSQETAFDTGAPISEEQIEELLNSGLDEQEGEKLLVLHVSEKDPVGTFTEVLKNPFGLEDALTEMEKVIKNLIDKSKYDLALQSLQSLRLHSILEDEVERFNEYLTRLKKDVMQNNKPKENELINKIRSSGLDIILHDELTRHDNFNNI.

The 233-residue stretch at 229 to 461 (FSIGNRDSKD…IDFAVSNYID (233 aa)) folds into the Ku domain.

This sequence belongs to the ku80 family. Heterodimer of pku70 and pku80.

Its subcellular location is the nucleus. It localises to the chromosome. The protein localises to the telomere. The catalysed reaction is ATP + H2O = ADP + phosphate + H(+). Single-stranded DNA-dependent ATP-dependent helicase. Involved in non-homologous end joining (NHEJ) DNA double strand break repair. DNA-binding is sequence-independent but has a high affinity to nicks in double-stranded DNA and to the ends of duplex DNA. Binds to naturally occurring chromosomal ends, and therefore provides chromosomal end protection. Required also for telomere recombination to repair telomeric ends in the absence of telomerase. ku70, of the ku70/ku80 heterodimer, binds to the stem loop of tlc1, the RNA component of telomerase. Involved in telomere maintenance. Interacts with telomeric repeats and subtelomeric sequences thereby controlling telomere length and protecting against subtelomeric rearrangement. Required for mating-type switching. The polypeptide is ATP-dependent DNA helicase II subunit 2 (pku80) (Schizosaccharomyces pombe (strain 972 / ATCC 24843) (Fission yeast)).